Consider the following 218-residue polypeptide: Deoxyribose-phosphate aldolase (218 aa).

Asp-89 (proton donor/acceptor) is an active-site residue. Residue Lys-152 is the Schiff-base intermediate with acetaldehyde of the active site. Residue Lys-182 is the Proton donor/acceptor of the active site.

Belongs to the DeoC/FbaB aldolase family. DeoC type 1 subfamily.

Its subcellular location is the cytoplasm. The catalysed reaction is 2-deoxy-D-ribose 5-phosphate = D-glyceraldehyde 3-phosphate + acetaldehyde. It participates in carbohydrate degradation; 2-deoxy-D-ribose 1-phosphate degradation; D-glyceraldehyde 3-phosphate and acetaldehyde from 2-deoxy-alpha-D-ribose 1-phosphate: step 2/2. In terms of biological role, catalyzes a reversible aldol reaction between acetaldehyde and D-glyceraldehyde 3-phosphate to generate 2-deoxy-D-ribose 5-phosphate. The chain is Deoxyribose-phosphate aldolase from Corynebacterium diphtheriae (strain ATCC 700971 / NCTC 13129 / Biotype gravis).